The sequence spans 96 residues: UPF0235 protein VP2619 (96 aa).

This sequence belongs to the UPF0235 family.

This is UPF0235 protein VP2619 from Vibrio parahaemolyticus serotype O3:K6 (strain RIMD 2210633).